The following is a 465-amino-acid chain: GTPase Der (465 aa).

EngA-type G domains are found at residues 3–166 (FLVA…LNEY) and 184–358 (IHFS…ACAN). Residues 9–16 (GRANVGKS), 56–60 (DTGGI), 118–121 (NKVD), 190–197 (GRPNVGKS), 237–241 (DTAGV), and 302–305 (NKWD) each bind GTP. The KH-like domain maps to 359–443 (KKITTADATC…PIVFEFKQSE (85 aa)). The tract at residues 446 to 465 (FADRKNKRSKDEGSKSKKVK) is disordered.

Belongs to the TRAFAC class TrmE-Era-EngA-EngB-Septin-like GTPase superfamily. EngA (Der) GTPase family. Associates with the 50S ribosomal subunit.

Functionally, GTPase that plays an essential role in the late steps of ribosome biogenesis. This chain is GTPase Der, found in Francisella tularensis subsp. mediasiatica (strain FSC147).